We begin with the raw amino-acid sequence, 321 residues long: Transcription factor MYB60 (321 aa).

2 HTH myb-type domains span residues 9–65 (KVGI…RPGI) and 66–116 (KRGN…KKKI). 2 consecutive DNA-binding regions (H-T-H motif) follow at residues 37–61 (WRSV…TNYL) and 89–112 (WAAI…NTHL). S-nitrosocysteine is present on residues C49 and C53. Disordered stretches follow at residues 196–215 (SPKA…EGSI) and 263–291 (HHQT…QKKH). Polar residues predominate over residues 206-215 (QNSSLEEGSI). The segment covering 273–290 (SDDHDHDHEMKMDHDQKK) has biased composition (basic and acidic residues).

As to expression, restricted to stomatal guard cells. Mostly expressed in leaves, cotyledons, hypocotyls, seeds and ripened berry skins.

The protein localises to the nucleus. Functionally, transcription factor involved in the regulation of gene (e.g. drought-regulated and flavonoid biosynthetic genes) expression and stomatal movements leading to negative regulation of responses to drought and responses to other physiological stimuli (e.g. light). The protein is Transcription factor MYB60 of Vitis vinifera (Grape).